A 389-amino-acid polypeptide reads, in one-letter code: Cellobiose 2-epimerase (389 aa).

Belongs to the cellobiose 2-epimerase family.

It catalyses the reaction D-cellobiose = beta-D-glucosyl-(1-&gt;4)-D-mannopyranose. Its function is as follows. Catalyzes the reversible epimerization of cellobiose to 4-O-beta-D-glucopyranosyl-D-mannose (Glc-Man). The chain is Cellobiose 2-epimerase from Ruminococcus albus (strain ATCC 27210 / DSM 20455 / JCM 14654 / NCDO 2250 / 7).